Here is a 655-residue protein sequence, read N- to C-terminus: E3 ubiquitin-protein ligase TRIM32 (655 aa).

The segment at cysteine 21–serine 66 adopts an RING-type zinc-finger fold. At serine 56 the chain carries Phosphoserine; by CHEK2. Residues valine 96–valine 139 form a B box-type; atypical zinc finger. The Zn(2+) site is built by cysteine 101, cysteine 104, cysteine 124, and histidine 129. The stretch at valine 139–glutamate 198 forms a coiled coil. The tract at residues methionine 327–serine 347 is disordered. A phosphoserine mark is found at serine 330, serine 337, and serine 341. 5 NHL repeats span residues leucine 360–lysine 403, aspartate 417–aspartate 460, glycine 461–aspartate 501, glycine 564–glycine 607, and glycine 608–histidine 648.

The protein belongs to the TRIM/RBCC family. As to quaternary structure, it self-associates. Interacts with DTNBP1. Interacts with PIAS4/PIASY upon treatment with UVB and TNF-alpha. Interacts with AMBRA1; promoting activation of ULK1 through unanchored 'Lys-63'-linked polyubiquitin chains. Interacts with TICAM1 and TAX1BP1; these interactions target TICAM1 to TAX1BP1-mediated selective autophagic degradation. In terms of processing, ubiquitinated. Post-translationally, phosphorylation at Ser-56 by CHEK2 under oxidative stress, activates the E3 ligase activity and promotes ATG7 ubiquitination leading to positive regulation of the autophagosme assembly. As to expression, ubiquitous. High expression in brain.

The protein localises to the cytoplasm. The catalysed reaction is S-ubiquitinyl-[E2 ubiquitin-conjugating enzyme]-L-cysteine + [acceptor protein]-L-lysine = [E2 ubiquitin-conjugating enzyme]-L-cysteine + N(6)-ubiquitinyl-[acceptor protein]-L-lysine.. The protein operates within protein modification; protein ubiquitination. Functionally, E3 ubiquitin ligase that plays a role in various biological processes including neural stem cell differentiation, innate immunity, inflammatory resonse and autophagy. Plays a role in virus-triggered induction of IFN-beta and TNF-alpha by mediating the ubiquitination of STING1. Mechanistically, targets STING1 for 'Lys-63'-linked ubiquitination which promotes the interaction of STING1 with TBK1. Regulates bacterial clearance and promotes autophagy in Mycobacterium tuberculosis-infected macrophages. Negatively regulates TLR3/4-mediated innate immune and inflammatory response by triggering the autophagic degradation of TICAM1 in an E3 activity-independent manner. Plays an essential role in oxidative stress induced cell death by inducing loss of transmembrane potential and enhancing mitochondrial reactive oxygen species (ROS) production during oxidative stress conditions. Ubiquitinates XIAP and targets it for proteasomal degradation. Ubiquitinates DTNBP1 (dysbindin) and promotes its degradation. May ubiquitinate BBS2. Ubiquitinates PIAS4/PIASY and promotes its degradation in keratinocytes treated with UVB and TNF-alpha. Also acts as a regulator of autophagy by mediating formation of unanchored 'Lys-63'-linked polyubiquitin chains that activate ULK1: interaction with AMBRA1 is required for ULK1 activation. Positively regulates dendritic branching by promoting ubiquitination and subsequent degradation of the epigenetic factor CDYL. Under metabolic stress and phosphorylation by CHK2, mediates 'Lys-63'-linked ubiquitination of ATG7 at 'Lys-41' to initiate autophagy. This is E3 ubiquitin-protein ligase TRIM32 from Mus musculus (Mouse).